We begin with the raw amino-acid sequence, 341 residues long: Guanine nucleotide-binding protein subunit beta (341 aa).

WD repeat units follow at residues 54–84 (GHLA…IVWD), 96–126 (LRSS…SIYS), 142–171 (GHTG…ALWN), 183–213 (GHTG…KLFD), 225–255 (GHES…RLFD), 269–299 (NIIC…NVWD), and 311–341 (GHDN…KIWN).

Belongs to the WD repeat G protein beta family. In terms of assembly, g proteins are composed of 3 units, alpha, beta and gamma.

Guanine nucleotide-binding proteins (G proteins) are involved as a modulator or transducer in various transmembrane signaling systems. The beta and gamma chains are required for the GTPase activity, for replacement of GDP by GTP, and for G protein-effector interaction. The polypeptide is Guanine nucleotide-binding protein subunit beta (Loligo forbesii (Veined squid)).